Consider the following 600-residue polypeptide: ATP-dependent lipid A-core flippase (600 aa).

The next 4 membrane-spanning stretches (helical) occupy residues 26 to 46 (VGIFLLSIIGFVIFASTQPML), 82 to 102 (LLIVLIAAWQGLGSFLGNYFL), 167 to 187 (VFLFIYLLMMNWKLTLVMLAI), and 266 to 286 (PMLQLVIYSAMAVLMFLVLFL). The ABC transmembrane type-1 domain maps to 30-321 (LLSIIGFVIF…LSEVSSTIQK (292 aa)). In terms of domain architecture, ABC transporter spans 353–589 (LEVKNLSFFY…NGYYARLHAM (237 aa)). Residue 387-394 (GRSGSGKS) participates in ATP binding.

The protein belongs to the ABC transporter superfamily. Lipid exporter (TC 3.A.1.106) family. Homodimer.

The protein localises to the cell inner membrane. It carries out the reaction ATP + H2O + lipid A-core oligosaccharideSide 1 = ADP + phosphate + lipid A-core oligosaccharideSide 2.. Its function is as follows. Involved in lipopolysaccharide (LPS) biosynthesis. Translocates lipid A-core from the inner to the outer leaflet of the inner membrane. Transmembrane domains (TMD) form a pore in the inner membrane and the ATP-binding domain (NBD) is responsible for energy generation. This chain is ATP-dependent lipid A-core flippase, found in Pseudomonas syringae pv. syringae (strain B728a).